We begin with the raw amino-acid sequence, 178 residues long: Large ribosomal subunit protein uL6 (178 aa).

It belongs to the universal ribosomal protein uL6 family. Part of the 50S ribosomal subunit.

In terms of biological role, this protein binds to the 23S rRNA, and is important in its secondary structure. It is located near the subunit interface in the base of the L7/L12 stalk, and near the tRNA binding site of the peptidyltransferase center. The sequence is that of Large ribosomal subunit protein uL6 from Thermoplasma volcanium (strain ATCC 51530 / DSM 4299 / JCM 9571 / NBRC 15438 / GSS1).